We begin with the raw amino-acid sequence, 370 residues long: tRNA-specific 2-thiouridylase MnmA (370 aa).

Residues 20 to 27 (GMSGGVDS) and methionine 46 contribute to the ATP site. The interaction with target base in tRNA stretch occupies residues 106 to 108 (NPD). Cysteine 111 (nucleophile) is an active-site residue. A disulfide bridge links cysteine 111 with cysteine 207. An ATP-binding site is contributed by glycine 135. Positions 157-159 (KDQ) are interaction with tRNA. The Cysteine persulfide intermediate role is filled by cysteine 207. Residues 318 to 319 (RY) are interaction with tRNA.

It belongs to the MnmA/TRMU family.

The protein localises to the cytoplasm. It catalyses the reaction S-sulfanyl-L-cysteinyl-[protein] + uridine(34) in tRNA + AH2 + ATP = 2-thiouridine(34) in tRNA + L-cysteinyl-[protein] + A + AMP + diphosphate + H(+). Catalyzes the 2-thiolation of uridine at the wobble position (U34) of tRNA, leading to the formation of s(2)U34. The protein is tRNA-specific 2-thiouridylase MnmA of Polynucleobacter asymbioticus (strain DSM 18221 / CIP 109841 / QLW-P1DMWA-1) (Polynucleobacter necessarius subsp. asymbioticus).